The following is a 146-amino-acid chain: Phospho-2-dehydro-3-deoxyheptonate aldolase (146 aa).

This sequence belongs to the class-II DAHP synthase family. Homodimer.

It carries out the reaction D-erythrose 4-phosphate + phosphoenolpyruvate + H2O = 7-phospho-2-dehydro-3-deoxy-D-arabino-heptonate + phosphate. It participates in metabolic intermediate biosynthesis; chorismate biosynthesis; chorismate from D-erythrose 4-phosphate and phosphoenolpyruvate: step 1/7. The chain is Phospho-2-dehydro-3-deoxyheptonate aldolase from Streptomyces lividans.